Here is a 285-residue protein sequence, read N- to C-terminus: Diaminopimelate epimerase 2 (285 aa).

Residues N11, N63, 73-74 (GN), N158, N191, 209-210 (ER), and 219-220 (GS) contribute to the substrate site.

This sequence belongs to the diaminopimelate epimerase family. Homodimer.

It localises to the cytoplasm. The enzyme catalyses (2S,6S)-2,6-diaminopimelate = meso-2,6-diaminopimelate. Its pathway is amino-acid biosynthesis; L-lysine biosynthesis via DAP pathway; DL-2,6-diaminopimelate from LL-2,6-diaminopimelate: step 1/1. Catalyzes the stereoinversion of LL-2,6-diaminopimelate (L,L-DAP) to meso-diaminopimelate (meso-DAP), a precursor of L-lysine and an essential component of the bacterial peptidoglycan. The sequence is that of Diaminopimelate epimerase 2 from Nostoc sp. (strain PCC 7120 / SAG 25.82 / UTEX 2576).